Here is a 146-residue protein sequence, read N- to C-terminus: Hemoglobin subunit beta (146 aa).

The residue at position 1 (valine 1) is an N-acetylvaline. A Globin domain is found at 2–146; the sequence is HLTDGEKNAL…VANALAHKYH (145 aa). Phosphoserine is present on serine 44. N6-acetyllysine is present on lysine 59. Histidine 63 provides a ligand contact to heme b. Lysine 82 is subject to N6-acetyllysine. Histidine 92 contributes to the heme b binding site. Residue cysteine 93 is modified to S-nitrosocysteine. Position 144 is an N6-acetyllysine (lysine 144).

Belongs to the globin family. Heterotetramer of two alpha chains and two beta chains. As to expression, red blood cells.

Its function is as follows. Involved in oxygen transport from the lung to the various peripheral tissues. This chain is Hemoglobin subunit beta, found in Otospermophilus beecheyi (California ground squirrel).